A 935-amino-acid chain; its full sequence is Coatomer subunit gamma (935 aa).

5 HEAT repeats span residues 258–296, 337–372, 373–410, 412–449, and 524–562; these read PQLF…RNSR, PEKI…TGTS, KNIS…NFPQ, WKSI…FVPQ, and PTLY…ARNK. The disordered stretch occupies residues 630 to 656; that stretch reads KSETTLDTTPEAESVPEKRADANSFAG. Phosphothreonine is present on threonine 638. The residue at position 643 (serine 643) is a Phosphoserine. Residue lysine 647 forms a Glycyl lysine isopeptide (Lys-Gly) (interchain with G-Cter in ubiquitin) linkage. Phosphoserine is present on serine 653.

The protein belongs to the COPG family. Oligomeric complex that consists of at least the alpha, beta, beta', gamma, delta, epsilon and zeta subunits. Interacts (via C-terminus) with GEA1 (via N-terminal region) and KEI1 (via C-terminal region).

The protein localises to the cytoplasm. It is found in the golgi apparatus membrane. It localises to the cytoplasmic vesicle. Its subcellular location is the COPI-coated vesicle membrane. The protein resides in the endosome. Its function is as follows. The coatomer is a cytosolic protein complex that binds to dilysine motifs and reversibly associates with Golgi non-clathrin-coated vesicles, which further mediate biosynthetic protein transport from the ER, via the Golgi up to the trans Golgi network. Coatomer complex is required for budding from Golgi membranes, and is essential for the retrograde Golgi-to-ER transport of dilysine-tagged proteins. This is Coatomer subunit gamma (SEC21) from Saccharomyces cerevisiae (strain ATCC 204508 / S288c) (Baker's yeast).